The following is a 215-amino-acid chain: Chaperone protein TorD (215 aa).

The protein belongs to the TorD/DmsD family. TorD subfamily.

It is found in the cytoplasm. In terms of biological role, involved in the biogenesis of TorA. Acts on TorA before the insertion of the molybdenum cofactor and, as a result, probably favors a conformation of the apoenzyme that is competent for acquiring the cofactor. This chain is Chaperone protein TorD, found in Vibrio atlanticus (strain LGP32) (Vibrio splendidus (strain Mel32)).